The following is a 1029-amino-acid chain: E3 ubiquitin-protein ligase UPL6 (1029 aa).

The interval 1-20 (MFFSGDPSTRKRVDLGGRST) is disordered. Residues 8 to 20 (STRKRVDLGGRST) show a composition bias toward basic and acidic residues. The IQ domain maps to 45–74 (QNSAALKIQKFFRGRRSMAIERSKVRHDFC). One can recognise an HECT domain in the interval 688-1029 (SEDDLRSSIR…ISAEAGFDLS (342 aa)). C997 acts as the Glycyl thioester intermediate in catalysis.

The protein belongs to the UPL family.

It catalyses the reaction S-ubiquitinyl-[E2 ubiquitin-conjugating enzyme]-L-cysteine + [acceptor protein]-L-lysine = [E2 ubiquitin-conjugating enzyme]-L-cysteine + N(6)-ubiquitinyl-[acceptor protein]-L-lysine.. Its pathway is protein modification; protein ubiquitination. Probable E3 ubiquitin-protein ligase which mediates ubiquitination and subsequent proteasomal degradation of target proteins. The sequence is that of E3 ubiquitin-protein ligase UPL6 (UPL6) from Arabidopsis thaliana (Mouse-ear cress).